Here is a 261-residue protein sequence, read N- to C-terminus: Kallikrein 1-related peptidase b9 (261 aa).

The signal sequence occupies residues 1 to 18 (MRFLILFLALSLGGIDAA). The propeptide at 19-24 (PPVHSR) is activation peptide. Positions 25 to 258 (IVGGFKCEKN…FTSWIKDTMA (234 aa)) constitute a Peptidase S1 domain. Disulfide bonds link C31–C173, C50–C66, C152–C219, C184–C198, and C209–C234. The Charge relay system role is filled by H65. The N-linked (GlcNAc...) asparagine glycan is linked to N102. D120 serves as the catalytic Charge relay system. S213 (charge relay system) is an active-site residue.

Belongs to the peptidase S1 family. Kallikrein subfamily.

The enzyme catalyses Preferential cleavage of Arg-|-Xaa bonds in small molecule substrates. Highly selective action to release kallidin (lysyl-bradykinin) from kininogen involves hydrolysis of Met-|-Xaa or Leu-|-Xaa.. Functionally, glandular kallikreins cleave Met-Lys and Arg-Ser bonds in kininogen to release Lys-bradykinin. The polypeptide is Kallikrein 1-related peptidase b9 (Klk1b9) (Mus musculus (Mouse)).